Here is a 427-residue protein sequence, read N- to C-terminus: Phosphoribosylamine--glycine ligase (427 aa).

The 205-residue stretch at 109 to 313 folds into the ATP-grasp domain; that stretch reads RNLMAEYKIE…LAEVVTGITE (205 aa). ATP is bound at residue 136-191; it reads VRDHDGDLAVKPIGLTGGKGVRIMGEQVDRAGAIEYIREINGGVVLEERLTGEEFT. Mg(2+) contacts are provided by Q271, E283, and N285. Residues Q271, E283, and N285 each contribute to the Mn(2+) site.

This sequence belongs to the GARS family. Mg(2+) serves as cofactor. Mn(2+) is required as a cofactor.

The catalysed reaction is 5-phospho-beta-D-ribosylamine + glycine + ATP = N(1)-(5-phospho-beta-D-ribosyl)glycinamide + ADP + phosphate + H(+). It participates in purine metabolism; IMP biosynthesis via de novo pathway; N(1)-(5-phospho-D-ribosyl)glycinamide from 5-phospho-alpha-D-ribose 1-diphosphate: step 2/2. The protein is Phosphoribosylamine--glycine ligase of Methanoregula boonei (strain DSM 21154 / JCM 14090 / 6A8).